Consider the following 132-residue polypeptide: Protein LH2 (132 aa).

The sequence is that of Protein LH2 from Pantherophis guttatus (Corn snake).